The sequence spans 320 residues: MAVVHRILRRGLSAASPLPSLRGLLLVSPQELGRRPASSSSSAAAAAGDVEAELRAAREDVRQLLKSNPCHPILVRLGWHDAGTYDKNITEWPKCGGANGSLRFGVELVHAANKGLLKALFLVIPIKSKYAGVTYADIFQLASATAIEEAGGPKIPMIYGRADVADGEECPPEGRLPAADPPSPAEHLREVFYRMGLSDKEIVALSGAHTLGRARPERSGWGKPETKYTENGPGAPGGQSWTSEWLKFDNSYFKEIKERRDEDLLVLPTDAVLFEDSSFKIHAEKYAEDQDAFFEDYAEAHAKLSNLGAKFDPPKGISLE.

Residues 1-42 constitute a chloroplast transit peptide; that stretch reads MAVVHRILRRGLSAASPLPSLRGLLLVSPQELGRRPASSSSS. His80 serves as the catalytic Proton acceptor. His209 is a binding site for heme b. Position 210 (Thr210) interacts with K(+). The segment at 213 to 241 is disordered; it reads RARPERSGWGKPETKYTENGPGAPGGQSW. Basic and acidic residues predominate over residues 214 to 228; the sequence is ARPERSGWGKPETKY. K(+) contacts are provided by Thr242 and Asp249.

It belongs to the peroxidase family. Ascorbate peroxidase subfamily. The cofactor is heme b. Expressed in leaves, stems and flowers.

It localises to the plastid. The protein localises to the chloroplast stroma. It catalyses the reaction L-ascorbate + H2O2 = L-dehydroascorbate + 2 H2O. Its function is as follows. Plays a key role in hydrogen peroxide removal. This Oryza sativa subsp. japonica (Rice) protein is Probable L-ascorbate peroxidase 5, chloroplastic.